Consider the following 213-residue polypeptide: Large ribosomal subunit protein uL3 (213 aa).

Belongs to the universal ribosomal protein uL3 family. As to quaternary structure, part of the 50S ribosomal subunit. Forms a cluster with proteins L14 and L19.

One of the primary rRNA binding proteins, it binds directly near the 3'-end of the 23S rRNA, where it nucleates assembly of the 50S subunit. In Desulforudis audaxviator (strain MP104C), this protein is Large ribosomal subunit protein uL3.